Consider the following 197-residue polypeptide: Rac-like GTP-binding protein ARAC11 (197 aa).

A GTP-binding site is contributed by 13-20 (GDGAVGKT). The short motif at 35-43 (YVPTVFDNF) is the Effector region element. GTP contacts are provided by residues 60–64 (DTAGQ) and 118–121 (TKLD). The residue at position 194 (cysteine 194) is a Cysteine methyl ester. Residue cysteine 194 is the site of S-geranylgeranyl cysteine attachment. A propeptide spans 195-197 (SIL) (removed in mature form).

Belongs to the small GTPase superfamily. Rho family. As to quaternary structure, part of a complex containing ROPGEF1 and PRK2. Interacts with UGT1, ICR1, ICR2, ICR3, ICR4 and ICR5. Interacts with PHIP1 when activated by GTP. As to expression, exclusively expressed in mature pollen and pollen tubes.

The protein resides in the cytoplasm. It localises to the membrane. The catalysed reaction is GTP + H2O = GDP + phosphate + H(+). May be involved in cell polarity control during the actin-dependent tip growth of pollen tubes. May regulate callose synthase 1 (CALS1) activity through the interaction with UGT1. Its function is as follows. Inactive GDP-bound Rho GTPases reside in the cytosol, are found in a complex with Rho GDP-dissociation inhibitors (Rho GDIs), and are released from the GDI protein in order to translocate to membranes upon activation. The polypeptide is Rac-like GTP-binding protein ARAC11 (Arabidopsis thaliana (Mouse-ear cress)).